The sequence spans 142 residues: uncharacterized protein (142 aa).

An N-terminal signal peptide occupies residues 1–26; that stretch reads MITEFIKSFLLFFFLPFFLSMPMIFA.

This is an uncharacterized protein from Schizosaccharomyces pombe (strain 972 / ATCC 24843) (Fission yeast).